Reading from the N-terminus, the 382-residue chain is Putative oxidoreductase C1F5.03c (382 aa).

Residues 7–27 (IVIVGGGITGVSCLYFLAHHP) form a helical membrane-spanning segment.

This sequence belongs to the TDA3 family.

The protein localises to the cytoplasm. Its subcellular location is the membrane. Its function is as follows. Putative oxidoreductase that negatively regulates the retrieval of cargo from late endosomes to the Golgi. The polypeptide is Putative oxidoreductase C1F5.03c (Schizosaccharomyces pombe (strain 972 / ATCC 24843) (Fission yeast)).